Here is a 116-residue protein sequence, read N- to C-terminus: Putative iron-sulfur cluster insertion protein ErpA (116 aa).

Positions 44, 108, and 110 each coordinate iron-sulfur cluster.

It belongs to the HesB/IscA family. As to quaternary structure, homodimer. Iron-sulfur cluster serves as cofactor.

Functionally, required for insertion of 4Fe-4S clusters. The protein is Putative iron-sulfur cluster insertion protein ErpA of Dechloromonas aromatica (strain RCB).